We begin with the raw amino-acid sequence, 1166 residues long: DEAD-box ATP-dependent RNA helicase 42 (1166 aa).

Basic and acidic residues-rich tracts occupy residues 1–12 (MEVEKSKYRSED) and 21–45 (DLKK…EKRR). Residues 1 to 460 (MEVEKSKYRS…NDDDPSLDED (460 aa)) are disordered. The stretch at 14 to 95 (DVVEEEADLK…KDRVKRRSER (82 aa)) forms a coiled coil. The segment covering 59-70 (SEDDYDRDDDEE) has biased composition (acidic residues). A compositionally biased stretch (basic residues) spans 80–95 (ERRRRDKDRVKRRSER). Acidic residues predominate over residues 101 to 110 (SEDDVEEEDE). The span at 111–206 (RDKRRVNEKE…RERERSREVG (96 aa)) shows a compositional bias: basic and acidic residues. Positions 130–302 (RGKDRKRDRE…KRKKEEAESE (173 aa)) form a coiled coil. The residue at position 210 (Ser-210) is a Phosphoserine. Positions 224 to 314 (EGGERKEKER…GDADGNEPKA (91 aa)) are enriched in basic and acidic residues. The residue at position 324 (Ser-324) is a Phosphoserine. 2 stretches are compositionally biased toward basic and acidic residues: residues 344–357 (ETKP…KMVD) and 416–426 (MNGKESGDRPK). A Q motif motif is present at residues 529–557 (KFWHQTGLTSKILDTMKKLNYEKPMPIQT). Residues 560-738 (LPIIMSGRDC…RKVLNKPVEI (179 aa)) enclose the Helicase ATP-binding domain. 573 to 580 (AKTGSGKT) provides a ligand contact to ATP. Positions 686-689 (DEAD) match the DEAD box motif. The 162-residue stretch at 749–910 (DITQLVEVRP…PVPDDLKALA (162 aa)) folds into the Helicase C-terminal domain.

It belongs to the DEAD box helicase family. DDX46/PRP5 subfamily.

The protein resides in the nucleus. It carries out the reaction ATP + H2O = ADP + phosphate + H(+). Helicase required for pre-mRNA splicing, cold-responsive gene regulation and cold tolerance. In Arabidopsis thaliana (Mouse-ear cress), this protein is DEAD-box ATP-dependent RNA helicase 42 (RH42).